Reading from the N-terminus, the 471-residue chain is Glutamate--tRNA ligase (471 aa).

The short motif at 9–19 is the 'HIGH' region element; it reads PSPTGYLHVGG. The Zn(2+) site is built by cysteine 98, cysteine 100, cysteine 125, and histidine 127. Positions 237 to 241 match the 'KMSKS' region motif; sequence KLSKR. Lysine 240 is a binding site for ATP.

This sequence belongs to the class-I aminoacyl-tRNA synthetase family. Glutamate--tRNA ligase type 1 subfamily. Monomer. It depends on Zn(2+) as a cofactor.

It is found in the cytoplasm. It catalyses the reaction tRNA(Glu) + L-glutamate + ATP = L-glutamyl-tRNA(Glu) + AMP + diphosphate. Catalyzes the attachment of glutamate to tRNA(Glu) in a two-step reaction: glutamate is first activated by ATP to form Glu-AMP and then transferred to the acceptor end of tRNA(Glu). The polypeptide is Glutamate--tRNA ligase (Salmonella arizonae (strain ATCC BAA-731 / CDC346-86 / RSK2980)).